Here is a 539-residue protein sequence, read N- to C-terminus: Tyrosinase (539 aa).

The Cu cation site is built by histidine 63, histidine 84, histidine 93, histidine 290, histidine 294, and histidine 333. The segment at residues 82-84 (CHH) is a cross-link (2'-(S-cysteinyl)-histidine (Cys-His)).

The protein belongs to the tyrosinase family. Homotetramer. Cu(2+) serves as cofactor. In terms of processing, the N-terminus is blocked.

The catalysed reaction is 2 L-dopa + O2 = 2 L-dopaquinone + 2 H2O. It carries out the reaction L-tyrosine + O2 = L-dopaquinone + H2O. Activated by acidifying treatment at pH 3.0. In terms of biological role, this is a copper-containing oxidase that functions in the formation of pigments such as melanins and other polyphenolic compounds. This is Tyrosinase (melO) from Aspergillus oryzae (strain ATCC 42149 / RIB 40) (Yellow koji mold).